Here is a 167-residue protein sequence, read N- to C-terminus: Leptin (167 aa).

The N-terminal stretch at 1 to 21 is a signal peptide; the sequence is MRCGPLCRFLWLWPYLSYIEA. A disulfide bridge links C117 with C167.

The protein belongs to the leptin family.

It is found in the secreted. Its function is as follows. Key player in the regulation of energy balance and body weight control. Once released into the circulation, has central and peripheral effects by binding LEPR, found in many tissues, which results in the activation of several major signaling pathways. In the hypothalamus, acts as an appetite-regulating factor that induces a decrease in food intake and an increase in energy consumption by inducing anorexinogenic factors and suppressing orexigenic neuropeptides, also regulates bone mass and secretion of hypothalamo-pituitary-adrenal hormones. In the periphery, increases basal metabolism, influences reproductive function, regulates pancreatic beta-cell function and insulin secretion, is pro-angiogenic for endothelial cell and affects innate and adaptive immunity. In the arcuate nucleus of the hypothalamus, activates by depolarization POMC neurons inducing FOS and SOCS3 expression to release anorexigenic peptides and inhibits by hyperpolarization NPY neurons inducing SOCS3 with a consequent reduction on release of orexigenic peptides. In addition to its known satiety inducing effect, has a modulatory role in nutrient absorption. In the intestine, reduces glucose absorption by enterocytes by activating PKC and leading to a sequential activation of p38, PI3K and ERK signaling pathways which exerts an inhibitory effect on glucose absorption. Acts as a growth factor on certain tissues, through the activation of different signaling pathways increases expression of genes involved in cell cycle regulation such as CCND1, via JAK2-STAT3 pathway, or VEGFA, via MAPK1/3 and PI3K-AKT1 pathways. May also play an apoptotic role via JAK2-STAT3 pathway and up-regulation of BIRC5 expression. Pro-angiogenic, has mitogenic activity on vascular endothelial cells and plays a role in matrix remodeling by regulating the expression of matrix metalloproteinases (MMPs) and tissue inhibitors of metalloproteinases (TIMPs). In innate immunity, modulates the activity and function of neutrophils by increasing chemotaxis and the secretion of oxygen radicals. Increases phagocytosis by macrophages and enhances secretion of pro-inflammatory mediators. Increases cytotoxic ability of NK cells. Plays a pro-inflammatory role, in synergy with IL1B, by inducing NOS2 which promotes the production of IL6, IL8 and Prostaglandin E2, through a signaling pathway that involves JAK2, PI3K, MAP2K1/MEK1 and MAPK14/p38. In adaptive immunity, promotes the switch of memory T-cells towards T helper-1 cell immune responses. Increases CD4(+)CD25(-) T-cell proliferation and reduces autophagy during TCR (T-cell receptor) stimulation, through MTOR signaling pathway activation and BCL2 up-regulation. This chain is Leptin (LEP), found in Ursus thibetanus (Asiatic black bear).